A 153-amino-acid chain; its full sequence is uncharacterized protein (153 aa).

The signal sequence occupies residues 1–21 (MKITITSLLFFLVMIVELASA).

This is an uncharacterized protein from Saccharomyces cerevisiae (strain ATCC 204508 / S288c) (Baker's yeast).